A 197-amino-acid polypeptide reads, in one-letter code: Protocatechuate 3,4-dioxygenase alpha chain (197 aa).

Residue Arg130 coordinates 3,4-dihydroxybenzoate.

Belongs to the intradiol ring-cleavage dioxygenase family. The enzyme is an oligomer of 12 copies of the alpha and beta chains. Fe(3+) is required as a cofactor.

It catalyses the reaction 3,4-dihydroxybenzoate + O2 = 3-carboxy-cis,cis-muconate + 2 H(+). Its pathway is aromatic compound metabolism; beta-ketoadipate pathway; 3-carboxy-cis,cis-muconate from 3,4-dihydroxybenzoate: step 1/1. In terms of biological role, plays an essential role in the utilization of numerous aromatic and hydroaromatic compounds via the beta-ketoadipate pathway. The polypeptide is Protocatechuate 3,4-dioxygenase alpha chain (pcaG) (Burkholderia cepacia (Pseudomonas cepacia)).